The following is a 590-amino-acid chain: Leucine-rich repeat transmembrane neuronal protein 4 (590 aa).

An N-terminal signal peptide occupies residues 1–30 (MGFRLITQLKGMSVLLVLFPTLLLVMLTGA). The region spanning 31 to 59 (QRACPKNCRCDGKIVYCESHAFADIPENI) is the LRRNT domain. The Extracellular segment spans residues 31–424 (QRACPKNCRC…HEYEHVSFHK (394 aa)). Residue N58 is glycosylated (N-linked (GlcNAc...) asparagine). LRR repeat units follow at residues 60–83 (SGGS…QFAG), 84–107 (LNQL…AFQG), 108–131 (IRRL…TFHP), 132–155 (VPNL…QFKG), 157–179 (RKLI…VFQD), 180–203 (CRNL…AFAG), 205–227 (LKLK…HFPR), 228–251 (LFNL…LTWT), 252–275 (WSSL…TFKC), and 276–299 (LPNL…TVNA). N-linked (GlcNAc...) asparagine glycosylation is present at N126. N291 is a glycosylation site (N-linked (GlcNAc...) asparagine). The LRRCT domain occupies 311–362 (NMWECSRSICPLFYWLKNFKGNKESTMICAGPKHIQGEKVSDAVETYNICSD). The helical transmembrane segment at 425–445 (IIAGSVALFLSVAMILLVIYV) threads the bilayer. Over 446 to 590 (SWKRYPASMK…PAIYLERITN (145 aa)) the chain is Cytoplasmic.

The protein belongs to the LRRTM family. As to quaternary structure, peripherally associated with AMPAR complex. AMPAR complex consists of an inner core made of 4 pore-forming GluA/GRIA proteins (GRIA1, GRIA2, GRIA3 and GRIA4) and 4 major auxiliary subunits arranged in a twofold symmetry. One of the two pairs of distinct binding sites is occupied either by CNIH2, CNIH3 or CACNG2, CACNG3. The other harbors CACNG2, CACNG3, CACNG4, CACNG8 or GSG1L. This inner core of AMPAR complex is complemented by outer core constituents binding directly to the GluA/GRIA proteins at sites distinct from the interaction sites of the inner core constituents. Outer core constituents include at least PRRT1, PRRT2, CKAMP44/SHISA9, FRRS1L and NRN1. The proteins of the inner and outer core serve as a platform for other, more peripherally associated AMPAR constituents, including LRRTM4. Alone or in combination, these auxiliary subunits control the gating and pharmacology of the AMPAR complex and profoundly impact their biogenesis and protein processing. Expressed in the brain (at protein level).

It localises to the cell membrane. The protein localises to the postsynaptic cell membrane. In terms of biological role, may play a role in the development and maintenance of the nervous system. Exhibits strong synaptogenic activity, restricted to excitatory presynaptic differentiation. The polypeptide is Leucine-rich repeat transmembrane neuronal protein 4 (Lrrtm4) (Rattus norvegicus (Rat)).